A 214-amino-acid chain; its full sequence is Glycine-rich protein 2 (214 aa).

Residues 8 to 75 (RAKGTVKWFS…RTKAVDVTGP (68 aa)) enclose the CSD domain. The disordered stretch occupies residues 54 to 91 (TVEFEVESGGDGRTKAVDVTGPDGAAVQGGRGGGGGGG). Gly residues predominate over residues 80 to 91 (VQGGRGGGGGGG). CCHC-type zinc fingers lie at residues 157–174 (SGCF…DCSQ) and 194–211 (GGCY…ECTS).

This Nicotiana sylvestris (Wood tobacco) protein is Glycine-rich protein 2 (GRP-2).